The following is a 187-amino-acid chain: UPF0167 protein MT2352 (187 aa).

Belongs to the UPF0167 family.

The sequence is that of UPF0167 protein MT2352 from Mycobacterium tuberculosis (strain CDC 1551 / Oshkosh).